The following is a 320-amino-acid chain: Cytochrome f (320 aa).

Positions 1–36 (MKLNSLINLIQKSIYSCTLLLTILNIICIAPNSSNA) are cleaved as a signal peptide. Positions 37, 57, 60, and 61 each coordinate heme. The helical transmembrane segment at 286-305 (IKGMIAFFFVSVLAQIFFVL) threads the bilayer.

The protein belongs to the cytochrome f family. In terms of assembly, the 4 large subunits of the cytochrome b6-f complex are cytochrome b6, subunit IV (17 kDa polypeptide, petD), cytochrome f and the Rieske protein, while the 4 small subunits are PetG, PetL, PetM and PetN. The complex functions as a dimer. It depends on heme as a cofactor.

The protein localises to the plastid. Its subcellular location is the chloroplast thylakoid membrane. Component of the cytochrome b6-f complex, which mediates electron transfer between photosystem II (PSII) and photosystem I (PSI), cyclic electron flow around PSI, and state transitions. The sequence is that of Cytochrome f (petA) from Porphyra purpurea (Red seaweed).